A 364-amino-acid polypeptide reads, in one-letter code: Appendage-associated protein (364 aa).

Coiled coils occupy residues 142–196 (IIHE…AECR) and 288–313 (RIAQAELAAAADALKRAADKLQALGK).

The protein resides in the secreted. Its function is as follows. Associates with actin filament appendages that are formed in the inclusion appendages of the parasitophorous vacuole during infection of the host erythrocyte. In Anaplasma marginale (strain Illinois), this protein is Appendage-associated protein.